Here is a 292-residue protein sequence, read N- to C-terminus: Large ribosomal subunit protein uL18 (292 aa).

This sequence belongs to the universal ribosomal protein uL18 family. In terms of assembly, component of the large ribosomal subunit (LSU).

The protein localises to the cytoplasm. The protein resides in the nucleus. Its function is as follows. Component of the ribosome, a large ribonucleoprotein complex responsible for the synthesis of proteins in the cell. The small ribosomal subunit (SSU) binds messenger RNAs (mRNAs) and translates the encoded message by selecting cognate aminoacyl-transfer RNA (tRNA) molecules. The large subunit (LSU) contains the ribosomal catalytic site termed the peptidyl transferase center (PTC), which catalyzes the formation of peptide bonds, thereby polymerizing the amino acids delivered by tRNAs into a polypeptide chain. The nascent polypeptides leave the ribosome through a tunnel in the LSU and interact with protein factors that function in enzymatic processing, targeting, and the membrane insertion of nascent chains at the exit of the ribosomal tunnel. The sequence is that of Large ribosomal subunit protein uL18 (rpl5) from Dictyostelium discoideum (Social amoeba).